Reading from the N-terminus, the 314-residue chain is Probable cell division protein WhiA (314 aa).

Positions 274–308 form a DNA-binding region, H-T-H motif; sequence SLKELGEMMSTGKISKSGVNHRLRKLNEMADKLRS.

It belongs to the WhiA family.

Involved in cell division and chromosome segregation. The polypeptide is Probable cell division protein WhiA (Staphylococcus saprophyticus subsp. saprophyticus (strain ATCC 15305 / DSM 20229 / NCIMB 8711 / NCTC 7292 / S-41)).